We begin with the raw amino-acid sequence, 386 residues long: Chaperone protein DnaJ (386 aa).

Residues 5–70 (DYYEVLGVER…QKRAAYDRYG (66 aa)) enclose the J domain. The CR-type zinc finger occupies 138 to 216 (GKDETIHVPQ…CGGHGQVKEE (79 aa)). Zn(2+) contacts are provided by C151, C154, C168, C171, C190, C193, C204, and C207. CXXCXGXG motif repeat units follow at residues 151–158 (CRPCEGTG), 168–175 (CETCGGHG), 190–197 (CHICQGRG), and 204–211 (CKTCGGHG).

It belongs to the DnaJ family. In terms of assembly, homodimer. The cofactor is Zn(2+).

Its subcellular location is the cytoplasm. Its function is as follows. Participates actively in the response to hyperosmotic and heat shock by preventing the aggregation of stress-denatured proteins and by disaggregating proteins, also in an autonomous, DnaK-independent fashion. Unfolded proteins bind initially to DnaJ; upon interaction with the DnaJ-bound protein, DnaK hydrolyzes its bound ATP, resulting in the formation of a stable complex. GrpE releases ADP from DnaK; ATP binding to DnaK triggers the release of the substrate protein, thus completing the reaction cycle. Several rounds of ATP-dependent interactions between DnaJ, DnaK and GrpE are required for fully efficient folding. Also involved, together with DnaK and GrpE, in the DNA replication of plasmids through activation of initiation proteins. The protein is Chaperone protein DnaJ of Hyphomonas neptunium (strain ATCC 15444).